The primary structure comprises 323 residues: Mortality factor 4-like protein 1 (323 aa).

In terms of domain architecture, Tudor-knot spans 12 to 62 (QEGERVLCFHGPLLYEAKCVKVAIKDKQVKYFIHHSGWNKNWDEWVPESRV). A disordered region spans residues 76-143 (LQKANQEQYA…RKKRARVDPT (68 aa)). Residues 94-227 (PGKKTSGLQQ…VAGIKEYFNV (134 aa)) are sufficient for interaction with SIN3A. The Nuclear localization signal signature appears at 96 to 107 (KKTSGLQQKNVD). Lysine 104 bears the N6-acetyllysine mark. The interval 125 to 191 (STSETPQPPR…FYLPAKKNVD (67 aa)) is interaction with RB1-1. The interval 149–303 (TFMNRVEVKV…FLKYLAKNSA (155 aa)) is sufficient for interaction with PHF12. Positions 152 to 323 (NRVEVKVKIP…APPEYHRKAV (172 aa)) constitute an MRG domain. Residues 284 to 305 (LALLLNYLHDFLKYLAKNSATL) form an interaction with RB1-2 region.

As to quaternary structure, component of the NuA4 histone acetyltransferase complex which contains the catalytic subunit KAT5/TIP60 and the subunits EP400, TRRAP/PAF400, BRD8/SMAP, EPC1, DMAP1/DNMAP1, RUVBL1/TIP49, RUVBL2, ING3, actin, ACTL6A/BAF53A, MORF4L1/MRG15, MORF4L2/MRGX, MRGBP, YEATS4/GAS41, VPS72/YL1 and MEAF6. The NuA4 complex interacts with MYC and the adenovirus E1A protein. MORF4L1 may also participate in the formation of NuA4 related complexes which lack the KAT5/TIP60 catalytic subunit, but which include the SWI/SNF related protein SRCAP. Component of the mSin3A histone deacetylase complex, which includes SIN3A, HDAC2, ARID4B, MORF4L1, RBBP4/RbAp48, and RBBP7/RbAp46. May also interact with PHF12 and one or more as yet undefined members of the TLE (transducin-like enhancer of split) family of transcriptional repressors. Component of the SIN3B complex, which includes SIN3B, HDAC2 or HDAC1, PHF12 and MORF4L1. Interacts with RB1 and KAT8. Interacts with the N-terminus of MRFAP1. Found in a complex composed of MORF4L1, MRFAP1 and RB1. Interacts with the entire BRCA complex, which contains BRCA1, PALB2, BRCA2 and RAD51. Interacts with PALB2. Forms a complex with MSL1 and NUPR1.

It localises to the nucleus. In terms of biological role, component of the NuA4 histone acetyltransferase (HAT) complex which is involved in transcriptional activation of select genes principally by acetylation of nucleosomal histones H4 and H2A. This modification may both alter nucleosome - DNA interactions and promote interaction of the modified histones with other proteins which positively regulate transcription. This complex may be required for the activation of transcriptional programs associated with oncogene and proto-oncogene mediated growth induction, tumor suppressor mediated growth arrest and replicative senescence, apoptosis, and DNA repair. The NuA4 complex ATPase and helicase activities seem to be, at least in part, contributed by the association of RUVBL1 and RUVBL2 with EP400. NuA4 may also play a direct role in DNA repair when directly recruited to sites of DNA damage. As part of the SIN3B complex represses transcription and counteracts the histone acetyltransferase activity of EP300 through the recognition H3K27ac marks by PHF12 and the activity of the histone deacetylase HDAC2. SIN3B complex is recruited downstream of the constitutively active genes transcriptional start sites through interaction with histones and mitigates histone acetylation and RNA polymerase II progression within transcribed regions contributing to the regulation of transcription. Required for homologous recombination repair (HRR) and resistance to mitomycin C (MMC). Involved in the localization of PALB2, BRCA2 and RAD51, but not BRCA1, to DNA-damage foci. In Pongo abelii (Sumatran orangutan), this protein is Mortality factor 4-like protein 1 (MORF4L1).